Consider the following 677-residue polypeptide: MTQVAKKILVTCALPYANGSIHLGHMLEHIQADVWVRYQRMRGHEVNFICADDAHGTPIMLKAQQLGITPEQMIGEMSQEHQTDFAGFNISYDNYHSTHSEENRQLSELIYTRLKENGFIKNRTISQLYDPEKGMFLPDRFVKGTCPKCKSPDQYGDNCEVCGATYSPTELIEPKSVVSGATPVMRDSEHFFFDLPSFSEMLQAWTRSGALQEQVANKMQEWFESGLQQWDISRDAPYFGFEIPNAPGKYFYVWLDAPIGYMGSFKNLCDKRGDSVSFDEYWKKDSTAELYHFIGKDIVYFHSLFWPAMLEGSNFRKPTNLFVHGYVTVNGAKMSKSRGTFIKASTWLNHFDADSLRYYYTAKLSSRIDDIDLNLEDFVQRVNADIVNKVVNLASRNAGFINKRFDGVLASELADPQLYKTFTDAAEVIGEAWESREFGKAVREIMALADLANRYVDEQAPWVVAKQEGRDADLQAICSMGINLFRVLMTYLKPVLPKLTERAEAFLNTELTWDGIQQPLLGHKVNPFKALYNRIDMKQVEALVEASKEEVKAAAAPVTGPLADDPIQETITFDDFAKVDLRVALIENAEFVEGSDKLLRLTLDLGGEKRNVFSGIRSAYPDPQALIGRHTIMVANLAPRKMRFGISEGMVMAAGPGGKDIFLLSPDAGAKPGHQVK.

Positions 15–25 (PYANGSIHLGH) match the 'HIGH' region motif. Residues Cys-146, Cys-149, Cys-159, and Cys-162 each coordinate Zn(2+). A 'KMSKS' region motif is present at residues 333–337 (KMSKS). Residue Lys-336 participates in ATP binding. Residues 575 to 677 (DFAKVDLRVA…AGAKPGHQVK (103 aa)) form the tRNA-binding domain.

Belongs to the class-I aminoacyl-tRNA synthetase family. MetG type 1 subfamily. As to quaternary structure, homodimer. It depends on Zn(2+) as a cofactor.

The protein resides in the cytoplasm. It carries out the reaction tRNA(Met) + L-methionine + ATP = L-methionyl-tRNA(Met) + AMP + diphosphate. Functionally, is required not only for elongation of protein synthesis but also for the initiation of all mRNA translation through initiator tRNA(fMet) aminoacylation. The protein is Methionine--tRNA ligase of Escherichia coli O157:H7.